Reading from the N-terminus, the 375-residue chain is Chaperone protein DnaJ (375 aa).

A J domain is found at 6–71 (DYYEVLGVPK…EKRRQYDQFG (66 aa)). The CR-type zinc-finger motif lies at 138 to 220 (GTTKKIDVTL…CYGTGYISSK (83 aa)). The Zn(2+) site is built by Cys-151, Cys-154, Cys-168, Cys-171, Cys-194, Cys-197, Cys-208, and Cys-211. CXXCXGXG motif repeat units follow at residues 151–158 (CSSCHGTG), 168–175 (CSKCGGRG), 194–201 (CPDCHGTG), and 208–215 (CPDCYGTG).

This sequence belongs to the DnaJ family. As to quaternary structure, homodimer. Zn(2+) serves as cofactor.

It is found in the cytoplasm. Participates actively in the response to hyperosmotic and heat shock by preventing the aggregation of stress-denatured proteins and by disaggregating proteins, also in an autonomous, DnaK-independent fashion. Unfolded proteins bind initially to DnaJ; upon interaction with the DnaJ-bound protein, DnaK hydrolyzes its bound ATP, resulting in the formation of a stable complex. GrpE releases ADP from DnaK; ATP binding to DnaK triggers the release of the substrate protein, thus completing the reaction cycle. Several rounds of ATP-dependent interactions between DnaJ, DnaK and GrpE are required for fully efficient folding. Also involved, together with DnaK and GrpE, in the DNA replication of plasmids through activation of initiation proteins. This chain is Chaperone protein DnaJ, found in Lachnospira eligens (strain ATCC 27750 / DSM 3376 / VPI C15-48 / C15-B4) (Eubacterium eligens).